Consider the following 107-residue polypeptide: Nucleoid-associated protein RBE_0048 (107 aa).

It belongs to the YbaB/EbfC family. Homodimer.

The protein resides in the cytoplasm. It is found in the nucleoid. Functionally, binds to DNA and alters its conformation. May be involved in regulation of gene expression, nucleoid organization and DNA protection. The polypeptide is Nucleoid-associated protein RBE_0048 (Rickettsia bellii (strain RML369-C)).